The sequence spans 219 residues: Thymidylate kinase (219 aa).

7 to 14 (GIDGCGKT) provides a ligand contact to ATP.

The protein belongs to the thymidylate kinase family.

It catalyses the reaction dTMP + ATP = dTDP + ADP. Functionally, phosphorylation of dTMP to form dTDP in both de novo and salvage pathways of dTTP synthesis. The sequence is that of Thymidylate kinase from Anaplasma phagocytophilum (strain HZ).